A 386-amino-acid polypeptide reads, in one-letter code: Alanine racemase 1 (386 aa).

The Proton acceptor; specific for D-alanine role is filled by lysine 38. At lysine 38 the chain carries N6-(pyridoxal phosphate)lysine. Arginine 136 lines the substrate pocket. Residue tyrosine 267 is the Proton acceptor; specific for L-alanine of the active site. Methionine 315 contacts substrate.

Belongs to the alanine racemase family. Pyridoxal 5'-phosphate serves as cofactor.

It catalyses the reaction L-alanine = D-alanine. The protein operates within amino-acid biosynthesis; D-alanine biosynthesis; D-alanine from L-alanine: step 1/1. Functionally, catalyzes the interconversion of L-alanine and D-alanine. May also act on other amino acids. This is Alanine racemase 1 (alr1) from Clostridium acetobutylicum (strain ATCC 824 / DSM 792 / JCM 1419 / IAM 19013 / LMG 5710 / NBRC 13948 / NRRL B-527 / VKM B-1787 / 2291 / W).